The sequence spans 392 residues: 1-deoxy-D-xylulose 5-phosphate reductoisomerase (392 aa).

Thr-14, Gly-15, Ser-16, Ile-17, Gly-40, Gln-43, and Asn-126 together coordinate NADPH. A 1-deoxy-D-xylulose 5-phosphate-binding site is contributed by Lys-127. Residue Glu-128 coordinates NADPH. Asp-150 is a binding site for Mn(2+). 1-deoxy-D-xylulose 5-phosphate is bound by residues Ser-151, Glu-152, Ser-176, and His-199. Position 152 (Glu-152) interacts with Mn(2+). Position 205 (Gly-205) interacts with NADPH. 1-deoxy-D-xylulose 5-phosphate-binding residues include Ser-212, Asn-217, Lys-218, and Glu-221. Glu-221 serves as a coordination point for Mn(2+).

Belongs to the DXR family. The cofactor is Mg(2+). Mn(2+) serves as cofactor.

The catalysed reaction is 2-C-methyl-D-erythritol 4-phosphate + NADP(+) = 1-deoxy-D-xylulose 5-phosphate + NADPH + H(+). Its pathway is isoprenoid biosynthesis; isopentenyl diphosphate biosynthesis via DXP pathway; isopentenyl diphosphate from 1-deoxy-D-xylulose 5-phosphate: step 1/6. In terms of biological role, catalyzes the NADPH-dependent rearrangement and reduction of 1-deoxy-D-xylulose-5-phosphate (DXP) to 2-C-methyl-D-erythritol 4-phosphate (MEP). The protein is 1-deoxy-D-xylulose 5-phosphate reductoisomerase of Corynebacterium glutamicum (strain ATCC 13032 / DSM 20300 / JCM 1318 / BCRC 11384 / CCUG 27702 / LMG 3730 / NBRC 12168 / NCIMB 10025 / NRRL B-2784 / 534).